Reading from the N-terminus, the 842-residue chain is Pentatricopeptide repeat-containing protein At3g23020 (842 aa).

The disordered stretch occupies residues 40–61; it reads YVPGTHESDKGPQRSTRNGDRG. Positions 45 to 59 are enriched in basic and acidic residues; it reads HESDKGPQRSTRNGD. PPR repeat units follow at residues 186–220, 221–255, 256–290, 297–331, 332–362, 366–400, 401–435, 436–470, 474–500, 504–538, 539–573, 574–608, 609–643, 644–674, 682–712, 716–750, 751–785, and 786–820; these read NVIHYNIMLRILGKACKWRYVQSLWDEMIRKGIKP, INSTYGTLIDVYSKGGLKVHALCWLGKMSKIGMQP, DEVTTGIVLQMYKKAREFQKAEEFFKKWSCDENKA, SSYTYNTMIDTYGKSGQIKEASETFKRMLEEGIVP, TTVTFNTMIHIYGNNGQLGEVTSLMKTMKLH, DTRTYNILISLHTKNNDIERAGAYFKEMKDDGLKP, DPVSYRTLLYAFSIRHMVEEAEGLIAEMDDDNVEI, DEYTQSALTRMYVEAEMLEKSWSWFKRFHVAGNMS, YSANIDAYGERGYLSEAERVFICCQEV, TVIEYNVMIKAYGISKSCEKACELFESMMSYGVTP, DKCTYNTLVQILASADMPHKGRCYLEKMRETGYVS, DCIPYCAVISSFVKLGQLNMAEEVYKEMVEYNIEP, DVVVYGVLINAFADTGNVQQAMSYVEAMKEAGIPG, NSVIYNSLIKLYTKVGYLDEAEAIYRKLLQS, DVYTSNCMINLYSERSMVRKAEAIFDSMKQR, NEFTFAMMLCMYKKNGRFEEATQIAKQMREMKILT, DPLSYNSVLGLFALDGRFKEAVETFKEMVSSGIQP, and DDSTFKSLGTILMKLGMSKKAVRKIEEIRKKEIKR.

Belongs to the PPR family. P subfamily.

The sequence is that of Pentatricopeptide repeat-containing protein At3g23020 from Arabidopsis thaliana (Mouse-ear cress).